Here is a 584-residue protein sequence, read N- to C-terminus: 2-succinyl-5-enolpyruvyl-6-hydroxy-3-cyclohexene-1-carboxylate synthase (584 aa).

It belongs to the TPP enzyme family. MenD subfamily. As to quaternary structure, homodimer. The cofactor is Mg(2+). It depends on Mn(2+) as a cofactor. Thiamine diphosphate is required as a cofactor.

The enzyme catalyses isochorismate + 2-oxoglutarate + H(+) = 5-enolpyruvoyl-6-hydroxy-2-succinyl-cyclohex-3-ene-1-carboxylate + CO2. It participates in quinol/quinone metabolism; 1,4-dihydroxy-2-naphthoate biosynthesis; 1,4-dihydroxy-2-naphthoate from chorismate: step 2/7. The protein operates within quinol/quinone metabolism; menaquinone biosynthesis. Functionally, catalyzes the thiamine diphosphate-dependent decarboxylation of 2-oxoglutarate and the subsequent addition of the resulting succinic semialdehyde-thiamine pyrophosphate anion to isochorismate to yield 2-succinyl-5-enolpyruvyl-6-hydroxy-3-cyclohexene-1-carboxylate (SEPHCHC). The protein is 2-succinyl-5-enolpyruvyl-6-hydroxy-3-cyclohexene-1-carboxylate synthase of Bacillus cereus (strain ZK / E33L).